Consider the following 967-residue polypeptide: Isoleucine--tRNA ligase (967 aa).

The 'HIGH' region signature appears at 68 to 78 (PYANGTLHMGH). Glutamate 583 lines the L-isoleucyl-5'-AMP pocket. The 'KMSKS' region signature appears at 624–628 (KMSKS). Lysine 627 is an ATP binding site. Cysteine 937, cysteine 940, cysteine 957, and cysteine 960 together coordinate Zn(2+).

This sequence belongs to the class-I aminoacyl-tRNA synthetase family. IleS type 1 subfamily. In terms of assembly, monomer. Zn(2+) is required as a cofactor.

Its subcellular location is the cytoplasm. The enzyme catalyses tRNA(Ile) + L-isoleucine + ATP = L-isoleucyl-tRNA(Ile) + AMP + diphosphate. In terms of biological role, catalyzes the attachment of isoleucine to tRNA(Ile). As IleRS can inadvertently accommodate and process structurally similar amino acids such as valine, to avoid such errors it has two additional distinct tRNA(Ile)-dependent editing activities. One activity is designated as 'pretransfer' editing and involves the hydrolysis of activated Val-AMP. The other activity is designated 'posttransfer' editing and involves deacylation of mischarged Val-tRNA(Ile). The sequence is that of Isoleucine--tRNA ligase from Prochlorococcus marinus (strain NATL1A).